Reading from the N-terminus, the 1917-residue chain is Diacylglycerol kinase eta (1917 aa).

Basic and acidic residues predominate over residues 1-10; sequence MSHLKLDTLH. The interval 1–37 is disordered; that stretch reads MSHLKLDTLHVQRSPRGSRRSSRSSGRSSACSSGSIS. Residues 23-37 show a composition bias toward low complexity; that stretch reads RSSGRSSACSSGSIS. The PH domain maps to 82–175; sequence AIIKEGFLLK…WLGSLKTATA (94 aa). 2 consecutive Phorbol-ester/DAG-type zinc fingers follow at residues 195-245 and 268-319; these read HHHW…IANC and PHQW…AVAC. The DAGKc domain occupies 350–486; sequence GNFSPLLVFV…DRWSIMVFEK (137 aa). Disordered regions lie at residues 1015–1053, 1114–1149, and 1380–1399; these read TTLC…PPRI, LEQQ…SEDE, and KDKD…EETN. Positions 1128–1145 are enriched in polar residues; that stretch reads PEQQQTPTNKGPNSLATT. Residues 1854–1917 enclose the SAM domain; sequence WSVNEVVTWL…LQAIKDLSEN (64 aa).

It belongs to the eukaryotic diacylglycerol kinase family.

The protein localises to the cytoplasm. The catalysed reaction is a 1,2-diacyl-sn-glycerol + ATP = a 1,2-diacyl-sn-glycero-3-phosphate + ADP + H(+). Phosphorylates diacylglycerol (DAG) to generate phosphatidic acid (PA). The sequence is that of Diacylglycerol kinase eta from Drosophila yakuba (Fruit fly).